Here is a 184-residue protein sequence, read N- to C-terminus: Ribosome maturation factor RimM (184 aa).

The PRC barrel domain maps to Ser-104–Phe-184.

The protein belongs to the RimM family. In terms of assembly, binds ribosomal protein uS19.

It is found in the cytoplasm. An accessory protein needed during the final step in the assembly of 30S ribosomal subunit, possibly for assembly of the head region. Essential for efficient processing of 16S rRNA. May be needed both before and after RbfA during the maturation of 16S rRNA. It has affinity for free ribosomal 30S subunits but not for 70S ribosomes. The polypeptide is Ribosome maturation factor RimM (Vibrio atlanticus (strain LGP32) (Vibrio splendidus (strain Mel32))).